Here is a 715-residue protein sequence, read N- to C-terminus: Dynein axonemal intermediate chain 7 (715 aa).

Residues Ala-291–Val-322 are disordered. Positions Asp-295 to Gly-318 are enriched in basic and acidic residues.

The protein belongs to the DNAI7 family. As to quaternary structure, part of the multisubunit axonemal dynein complex formed at least of two heavy chains and a number of intermediate and light chains. Associates with tubulin. Interacts with microtubule. Ubiquitinated. Ubiquitination leads to its degradation through the 26S proteasome. Ubiquitin-proteasome-mediated DNAI7 degradation occurs in mitosis.

The protein resides in the cell projection. It is found in the cilium. It localises to the cytoplasm. Functionally, via its association with the multisubunit axonemal dynein complex, is potentially involved in the regulation of cilia function. May act as a cell cycle regulator. The sequence is that of Dynein axonemal intermediate chain 7 from Bos taurus (Bovine).